The primary structure comprises 71 residues: Phosphatidylinositol N-acetylglucosaminyltransferase subunit Y (71 aa).

Residues Met-1–Leu-3 lie on the Cytoplasmic side of the membrane. Residues Ser-4 to Val-26 traverse the membrane as a helical segment. The Lumenal segment spans residues Glu-27–Ser-44. Residues Leu-45 to Ile-65 form a helical membrane-spanning segment. At Lys-66 to Asn-71 the chain is on the cytoplasmic side.

As to quaternary structure, component of the glycosylphosphatidylinositol-N-acetylglucosaminyltransferase (GPI-GnT) complex composed at least by PIGA, PIGC, PIGH, PIGP, PIGQ, PIGY and DPM2. Interacts directly with PIGA; this interaction regulates glycosylphosphatidylinositol-N-acetylglucosaminyltransferase activity. Does not interact with Ras proteins.

It is found in the endoplasmic reticulum membrane. Its pathway is glycolipid biosynthesis; glycosylphosphatidylinositol-anchor biosynthesis. Its function is as follows. Part of the glycosylphosphatidylinositol-N-acetylglucosaminyltransferase (GPI-GnT) complex that catalyzes the transfer of N-acetylglucosamine from UDP-N-acetylglucosamine to phosphatidylinositol and participates in the first step of GPI biosynthesis. May act by regulating the catalytic subunit PIGA. The polypeptide is Phosphatidylinositol N-acetylglucosaminyltransferase subunit Y (Homo sapiens (Human)).